Consider the following 194-residue polypeptide: Imidazoleglycerol-phosphate dehydratase (194 aa).

It belongs to the imidazoleglycerol-phosphate dehydratase family.

It localises to the cytoplasm. The catalysed reaction is D-erythro-1-(imidazol-4-yl)glycerol 3-phosphate = 3-(imidazol-4-yl)-2-oxopropyl phosphate + H2O. It participates in amino-acid biosynthesis; L-histidine biosynthesis; L-histidine from 5-phospho-alpha-D-ribose 1-diphosphate: step 6/9. This Thermus thermophilus (strain ATCC BAA-163 / DSM 7039 / HB27) protein is Imidazoleglycerol-phosphate dehydratase.